The sequence spans 309 residues: MSEDQRVISQPIELHKLSIVDKHSQGQQQQPHQKQHEVQPESKSPRVTTPLKPKRLAIPISSPQRSTTNQSPVSDHASPISTDQDLIYKLAAKHREINELSFKLEVAQKELKQLELQFKDTLPRNGQQKLGNQNPSEYLSTFTKRIQQTFVDVNNSPNMLKGKKSINDFFSKPNNNVNSNINNTLPNRKPNPPPNRSQRMQNIAPSRSSESTPTSGPPLLPPRNTMKNANTTATAGENTPFLQRILNKFNQMNMEEDEFDDLLEKRKSKKDHYYIKENLGYEYDEVRSEDEDDEEFEPMGDIPVHLFKR.

3 disordered regions span residues 1–80, 164–240, and 286–309; these read MSED…ASPI, KSIN…ENTP, and VRSE…LFKR. 2 stretches are compositionally biased toward basic and acidic residues: residues 13-24 and 34-44; these read ELHKLSIVDKHS and KQHEVQPESKS. 5 positions are modified to phosphoserine: Ser-44, Ser-71, Ser-74, Ser-78, and Ser-165. Positions 61-80 are enriched in polar residues; that stretch reads SSPQRSTTNQSPVSDHASPI. 3 stretches are compositionally biased toward low complexity: residues 174–188, 205–214, and 222–239; these read NNNV…LPNR, PSRSSESTPT, and PRNT…GENT. Acidic residues predominate over residues 287–298; the sequence is RSEDEDDEEFEP. Ser-288 bears the Phosphoserine mark.

Functionally, may be involved in actin cytoskeleton organization and biogenesis. This is Assembly-complementing factor 4 (ACF4) from Saccharomyces cerevisiae (strain ATCC 204508 / S288c) (Baker's yeast).